The following is a 196-amino-acid chain: HTH-type transcriptional regulator Hpr (196 aa).

Residues 13 to 157 form the HTH marR-type domain; it reads SIVFSHKMAL…LICIVRHIYG (145 aa). A DNA-binding region (H-T-H motif) is located at residues 63 to 86; sequence ISDIASHGVMHVSTAFNFSKKLEA.

Homodimer.

Its function is as follows. Negative regulator of protease production and sporulation. The sequence is that of HTH-type transcriptional regulator Hpr from Shouchella clausii (strain KSM-K16) (Alkalihalobacillus clausii).